The following is a 306-amino-acid chain: Anamorsin (306 aa).

Positions 6–172 (IAPGQRVAVI…KPNFEVGSSS (167 aa)) are N-terminal SAM-like domain. Positions 173 to 224 (QLKLSFAKKTSPSGKPSVDPATAKLWTLSASDMNDEEMDLLDSDELLDSEDL) are linker. Residues cysteine 237, cysteine 246, cysteine 249, and cysteine 251 each coordinate [2Fe-2S] cluster. The tract at residues 237 to 251 (CKEKGKKKACKNCTC) is fe-S binding site A. The [4Fe-4S] cluster site is built by cysteine 270, cysteine 273, cysteine 281, and cysteine 284. 2 short sequence motifs (cx2C motif) span residues 270 to 273 (CGNC) and 281 to 284 (CASC). The fe-S binding site B stretch occupies residues 270 to 284 (CGNCYLGDAFRCASC).

The protein belongs to the anamorsin family. As to quaternary structure, monomer. Interacts with NDOR1. Interacts with CHCHD4. The cofactor is [2Fe-2S] cluster. It depends on [4Fe-4S] cluster as a cofactor.

It is found in the cytoplasm. It localises to the nucleus. The protein localises to the mitochondrion intermembrane space. Functionally, component of the cytosolic iron-sulfur (Fe-S) protein assembly (CIA) machinery required for the maturation of extramitochondrial Fe-S proteins. Part of an electron transfer chain functioning in an early step of cytosolic Fe-S biogenesis, facilitating the de novo assembly of a [4Fe-4S] cluster on the scaffold complex NUBP1-NUBP2. Electrons are transferred to CIAPIN1 from NADPH via the FAD- and FMN-containing protein NDOR1. NDOR1-CIAPIN1 are also required for the assembly of the diferric tyrosyl radical cofactor of ribonucleotide reductase (RNR), probably by providing electrons for reduction during radical cofactor maturation in the catalytic small subunit. Has anti-apoptotic effects in the cell. Involved in negative control of cell death upon cytokine withdrawal. Promotes development of hematopoietic cells. This chain is Anamorsin, found in Gallus gallus (Chicken).